Reading from the N-terminus, the 67-residue chain is MPKMKTKSSAKKRFKITATGKVKAAAAGKRHGMIKRSNKFIRDARGTMVLAEPDGRKVIKNYLPNGL.

Belongs to the bacterial ribosomal protein bL35 family.

This Rhizobium johnstonii (strain DSM 114642 / LMG 32736 / 3841) (Rhizobium leguminosarum bv. viciae) protein is Large ribosomal subunit protein bL35.